The chain runs to 418 residues: MKHSSDICIVGAGISGLTCASHLLDSPACRGLSLRIFDMQQEAGGRIRSKMLDGKASIELGAGRYSPQLHPHFQSAMQHYSQKSEVYPFTQLKFKSHVQQKLKRAMNELSPRLKEHGKESFLQFVSRYQGHDSAVGMIRSMGYDALFLPDISAEMAYDIVGKHPEIQSVTDNDANQWFAAETGFAGLIQGIKAKVKAAGARFSLGYRLLSVRTDGDGYLLQLAGDDGWKLEHRTRHLILAIPPSAMAGLNVDFPEAWSGARYGSLPLFKGFLTYGEPWWLDYKLDDQVLIVDNPLRKIYFKGDKYLFFYTDSEMANYWRGCVAEGEDGYLEQIRTHLASALGIVRERIPQPLAHVHKYWAHGVEFCRDSDIDHPSALSHRDSGIIACSDAYTEHCGWMEGGLLSAREASRLLLQRIAA.

Glycine 13 contributes to the Mg(2+) binding site. Serine 15 lines the FAD pocket. Glycine 16 lines the Mg(2+) pocket. Aspartate 38, arginine 46, and arginine 64 together coordinate FAD. Residues arginine 64 and histidine 163 each coordinate substrate. Leucine 208 provides a ligand contact to FAD. Residue alanine 240 participates in Mg(2+) binding. Position 309 (tyrosine 309) interacts with substrate. Methionine 398 contacts FAD.

This sequence belongs to the flavin monoamine oxidase family. Homodimer. Requires FAD as cofactor. Mg(2+) serves as cofactor.

It catalyses the reaction L-tryptophan + O2 = 2-iminio-3-(indol-3-yl)propanoate + H2O2. The enzyme catalyses 7-chloro-L-tryptophan + O2 = 3-(7-chloroindol-3-yl)-2-iminopropanoate + H2O2. The protein operates within pigment biosynthesis; violacein biosynthesis. In terms of biological role, the enzyme generates the imine form of indole 3-pyruvate (IPA) from L-tryptophan (L-Trp), with concomitant two-electron reduction of O(2) to H(2)O(2). In Chromobacterium violaceum (strain ATCC 12472 / DSM 30191 / JCM 1249 / CCUG 213 / NBRC 12614 / NCIMB 9131 / NCTC 9757 / MK), this protein is Flavin-dependent L-tryptophan oxidase VioA (vioA).